A 1069-amino-acid polypeptide reads, in one-letter code: Carbamoyl phosphate synthase large chain (1069 aa).

Positions 1–401 (MPLNKDIKKV…AFLKGIRSLE (401 aa)) are carboxyphosphate synthetic domain. ATP-binding residues include Arg-129, Arg-169, Gly-175, Gly-176, Lys-208, Val-210, Glu-215, Gly-241, Ile-242, His-243, Gln-284, and Glu-298. Residues 133–327 (RDMMNRIGEP…IAKLAAKIAL (195 aa)) form the ATP-grasp 1 domain. The Mg(2+) site is built by Gln-284, Glu-298, and Asn-300. Mn(2+)-binding residues include Gln-284, Glu-298, and Asn-300. The oligomerization domain stretch occupies residues 402–549 (IGKYSLDHKK…YSTYEQYDEV (148 aa)). The interval 550–932 (EVSNRRKVIV…ALYKGFVGAN (383 aa)) is carbamoyl phosphate synthetic domain. In terms of domain architecture, ATP-grasp 2 spans 674–864 (DELLERLDIS…IVDIATQVMM (191 aa)). ATP-binding residues include Arg-710, Lys-749, Leu-751, Glu-755, Gly-780, Val-781, His-782, Ser-783, Gln-823, and Glu-835. Residues Gln-823, Glu-835, and Asn-837 each coordinate Mg(2+). The Mn(2+) site is built by Gln-823, Glu-835, and Asn-837. The MGS-like domain occupies 932-1069 (NMYPSKEKGK…KDLEVFDITK (138 aa)). The interval 933–1069 (MYPSKEKGKI…KDLEVFDITK (137 aa)) is allosteric domain.

Belongs to the CarB family. As to quaternary structure, composed of two chains; the small (or glutamine) chain promotes the hydrolysis of glutamine to ammonia, which is used by the large (or ammonia) chain to synthesize carbamoyl phosphate. Tetramer of heterodimers (alpha,beta)4. It depends on Mg(2+) as a cofactor. Requires Mn(2+) as cofactor.

The catalysed reaction is hydrogencarbonate + L-glutamine + 2 ATP + H2O = carbamoyl phosphate + L-glutamate + 2 ADP + phosphate + 2 H(+). The enzyme catalyses hydrogencarbonate + NH4(+) + 2 ATP = carbamoyl phosphate + 2 ADP + phosphate + 2 H(+). The protein operates within amino-acid biosynthesis; L-arginine biosynthesis; carbamoyl phosphate from bicarbonate: step 1/1. It functions in the pathway pyrimidine metabolism; UMP biosynthesis via de novo pathway; (S)-dihydroorotate from bicarbonate: step 1/3. Large subunit of the glutamine-dependent carbamoyl phosphate synthetase (CPSase). CPSase catalyzes the formation of carbamoyl phosphate from the ammonia moiety of glutamine, carbonate, and phosphate donated by ATP, constituting the first step of 2 biosynthetic pathways, one leading to arginine and/or urea and the other to pyrimidine nucleotides. The large subunit (synthetase) binds the substrates ammonia (free or transferred from glutamine from the small subunit), hydrogencarbonate and ATP and carries out an ATP-coupled ligase reaction, activating hydrogencarbonate by forming carboxy phosphate which reacts with ammonia to form carbamoyl phosphate. This chain is Carbamoyl phosphate synthase large chain, found in Clostridium botulinum (strain Eklund 17B / Type B).